The primary structure comprises 357 residues: F-box only protein 25 (357 aa).

The interaction with beta-actin stretch occupies residues 1–83 (MPFLGQDWRS…NDTNTQCFYR (83 aa)). One can recognise an F-box domain in the interval 225-273 (LTLSDLPVHMLSNILYRFSDGWDIVTLGQVTPTLSALSEDRQLWKKLCQ).

In terms of assembly, part of a SCF (SKP1-cullin-F-box) protein ligase complex consisting of FBXO25, SKP1, CUL1 and RBX1. Interacts directly with SKP1 and CUL1. Interacts (via C-terminus) with beta-actin (via N-terminus).

Its subcellular location is the nucleus. It participates in protein modification; protein ubiquitination. Substrate-recognition component of the SCF (SKP1-CUL1-F-box protein)-type E3 ubiquitin ligase complex. May play a role in accumulation of expanded polyglutamine (polyQ) protein huntingtin (HTT). The protein is F-box only protein 25 (FBXO25) of Bos taurus (Bovine).